The sequence spans 128 residues: Platelet basic protein (128 aa).

Residues 1 to 34 (MSLRLDTTPSCNSARPLHALQVLLLLSLLLTALA) form the signal peptide. 2 disulfides stabilise this stretch: C63–C89 and C65–C105.

The protein belongs to the intercrine alpha (chemokine CxC) family. As to quaternary structure, beta-thromboglobulin is a homotetramer. In terms of processing, proteolytic removal of residues 1-9 produces the active peptide connective tissue-activating peptide III (CTAP-III) (low-affinity platelet factor IV (LA-PF4)). Proteolytic removal of residues 1-13 produces the active peptide beta-thromboglobulin, which is released from platelets along with platelet factor 4 and platelet-derived growth factor. Post-translationally, NAP-2(1-66) is produced by proteolytical processing, probably after secretion by leukocytes other than neutrophils. In terms of processing, NAP-2(73) and NAP-2(74) seem not be produced by proteolytical processing of secreted precursors but are released in an active form from platelets.

It localises to the secreted. Functionally, LA-PF4 stimulates DNA synthesis, mitosis, glycolysis, intracellular cAMP accumulation, prostaglandin E2 secretion, and synthesis of hyaluronic acid and sulfated glycosaminoglycan. It also stimulates the formation and secretion of plasminogen activator by human synovial cells. NAP-2 is a ligand for CXCR1 and CXCR2, and NAP-2, NAP-2(73), NAP-2(74), NAP-2(1-66), and most potent NAP-2(1-63) are chemoattractants and activators for neutrophils. TC-1 and TC-2 are antibacterial proteins, in vitro released from activated platelet alpha-granules. CTAP-III(1-81) is more potent than CTAP-III desensitize chemokine-induced neutrophil activation. The protein is Platelet basic protein (PPBP) of Homo sapiens (Human).